We begin with the raw amino-acid sequence, 140 residues long: uncharacterized protein (140 aa).

This is an uncharacterized protein from Escherichia coli O157:H7.